Consider the following 310-residue polypeptide: MEFKHISVLLDECIEGLNIKENGIYVDCTLGGAGHSSEILKNLSKEGKLIGIDQDEEALKAASEKLKEYENVLYKHSNFYHIKDILEELEVGKVDGILMDLGVSSYQLDEKSRGFSYMQNAPLDMRMNKKSSLDAYEVVNFYDESKLARIIKDYGEERFAKRISNFIVESRENKKIETTGELVDIIKRAIPAKFRREGPHPAKRTFQAIRIEVNGELEILNKAIEDSVKSLKSGGRIAIITFHSLEDRIVKNKFKELEDPCICPKDFPICTCGKEPLVKIITRKPIDPSKEEVEINPRSRSAKLRIAEKL.

S-adenosyl-L-methionine-binding positions include alanine 33–histidine 35, aspartate 53, phenylalanine 79, aspartate 100, and glutamine 107.

This sequence belongs to the methyltransferase superfamily. RsmH family.

Its subcellular location is the cytoplasm. The enzyme catalyses cytidine(1402) in 16S rRNA + S-adenosyl-L-methionine = N(4)-methylcytidine(1402) in 16S rRNA + S-adenosyl-L-homocysteine + H(+). Its function is as follows. Specifically methylates the N4 position of cytidine in position 1402 (C1402) of 16S rRNA. This Clostridium tetani (strain Massachusetts / E88) protein is Ribosomal RNA small subunit methyltransferase H.